The primary structure comprises 86 residues: Large ribosomal subunit protein bL27 (86 aa).

The interval 1–26 (MATKKAGGSSRNGRDSAGRRLGIKKS) is disordered.

This sequence belongs to the bacterial ribosomal protein bL27 family.

The sequence is that of Large ribosomal subunit protein bL27 from Rickettsia typhi (strain ATCC VR-144 / Wilmington).